The primary structure comprises 158 residues: Flagellar assembly factor FliW (158 aa).

This sequence belongs to the FliW family. Interacts with translational regulator CsrA and flagellin(s).

It is found in the cytoplasm. Functionally, acts as an anti-CsrA protein, binds CsrA and prevents it from repressing translation of its target genes, one of which is flagellin. Binds to flagellin and participates in the assembly of the flagellum. This chain is Flagellar assembly factor FliW, found in Syntrophus aciditrophicus (strain SB).